The sequence spans 453 residues: tRNA modification GTPase MnmE (453 aa).

Positions 22, 79, and 119 each coordinate (6S)-5-formyl-5,6,7,8-tetrahydrofolate. One can recognise a TrmE-type G domain in the interval 215–376; sequence GMKVVIAGRP…LKQHLKSLMG (162 aa). K(+) is bound at residue asparagine 225. Residues 225 to 230, 244 to 250, 269 to 272, and 334 to 337 contribute to the GTP site; these read NAGKSS, TEIAGTT, DTAG, and NKAD. Serine 229 contacts Mg(2+). The K(+) site is built by threonine 244, isoleucine 246, and threonine 249. Threonine 250 lines the Mg(2+) pocket. Lysine 453 provides a ligand contact to (6S)-5-formyl-5,6,7,8-tetrahydrofolate.

Belongs to the TRAFAC class TrmE-Era-EngA-EngB-Septin-like GTPase superfamily. TrmE GTPase family. Homodimer. Heterotetramer of two MnmE and two MnmG subunits. K(+) is required as a cofactor.

The protein localises to the cytoplasm. In terms of biological role, exhibits a very high intrinsic GTPase hydrolysis rate. Involved in the addition of a carboxymethylaminomethyl (cmnm) group at the wobble position (U34) of certain tRNAs, forming tRNA-cmnm(5)s(2)U34. This chain is tRNA modification GTPase MnmE, found in Shewanella oneidensis (strain ATCC 700550 / JCM 31522 / CIP 106686 / LMG 19005 / NCIMB 14063 / MR-1).